A 532-amino-acid chain; its full sequence is Light-independent protochlorophyllide reductase subunit B (532 aa).

Asp36 contributes to the [4Fe-4S] cluster binding site. The active-site Proton donor is Asp318. Residue 453 to 454 coordinates substrate; it reads GM.

The protein belongs to the ChlB/BchB/BchZ family. In terms of assembly, protochlorophyllide reductase is composed of three subunits; ChlL, ChlN and ChlB. Forms a heterotetramer of two ChlB and two ChlN subunits. It depends on [4Fe-4S] cluster as a cofactor.

Its subcellular location is the plastid. It localises to the chloroplast. It catalyses the reaction chlorophyllide a + oxidized 2[4Fe-4S]-[ferredoxin] + 2 ADP + 2 phosphate = protochlorophyllide a + reduced 2[4Fe-4S]-[ferredoxin] + 2 ATP + 2 H2O. Its pathway is porphyrin-containing compound metabolism; chlorophyll biosynthesis (light-independent). In terms of biological role, component of the dark-operative protochlorophyllide reductase (DPOR) that uses Mg-ATP and reduced ferredoxin to reduce ring D of protochlorophyllide (Pchlide) to form chlorophyllide a (Chlide). This reaction is light-independent. The NB-protein (ChlN-ChlB) is the catalytic component of the complex. The sequence is that of Light-independent protochlorophyllide reductase subunit B from Tetradesmus obliquus (Green alga).